An 883-amino-acid polypeptide reads, in one-letter code: Valine--tRNA ligase (883 aa).

The short motif at 51-61 (PNVTGKLHLGH) is the 'HIGH' region element. The 'KMSKS' region signature appears at 527–531 (KMSKS). An ATP-binding site is contributed by lysine 530. A coiled-coil region spans residues 811–847 (LEALIDLNVEIARLEKELEKWNKEVARVQGKLNNERF).

Belongs to the class-I aminoacyl-tRNA synthetase family. ValS type 1 subfamily. In terms of assembly, monomer.

It is found in the cytoplasm. It carries out the reaction tRNA(Val) + L-valine + ATP = L-valyl-tRNA(Val) + AMP + diphosphate. Catalyzes the attachment of valine to tRNA(Val). As ValRS can inadvertently accommodate and process structurally similar amino acids such as threonine, to avoid such errors, it has a 'posttransfer' editing activity that hydrolyzes mischarged Thr-tRNA(Val) in a tRNA-dependent manner. The chain is Valine--tRNA ligase from Listeria monocytogenes serovar 1/2a (strain ATCC BAA-679 / EGD-e).